Reading from the N-terminus, the 258-residue chain is Axonemal dynein light intermediate polypeptide 1 (258 aa).

2 disordered regions span residues 19-60 (RNTE…CVPD) and 207-231 (VNEQKAKCEATEKRESERRQVEEKK). Residues 34–48 (SPQQPGPSGSAPQLP) are compositionally biased toward low complexity. Residues 176–255 (MRKALQAEQG…LKAQLEGIIA (80 aa)) adopt a coiled-coil conformation.

It belongs to the inner dynein arm light chain family. In terms of assembly, interacts with CFAP45. Interacts with DYNC1H1.

It localises to the cell projection. It is found in the cilium. Its subcellular location is the flagellum. The protein localises to the dynein axonemal particle. The protein resides in the cytoplasm. Its function is as follows. Involved in sperm flagellum assembly. The chain is Axonemal dynein light intermediate polypeptide 1 (DNALI1) from Macaca fascicularis (Crab-eating macaque).